The primary structure comprises 330 residues: Peroxidase 70 (330 aa).

The signal sequence occupies residues 1 to 24; the sequence is MRSFTNLNPCYVLLPFFLVLATNA. 4 cysteine pairs are disulfide-bonded: C43–C119, C76–C81, C125–C326, and C202–C234. The active-site Proton acceptor is H74. D75, V78, G80, D82, and S84 together coordinate Ca(2+). A substrate-binding site is contributed by P165. H195 serves as a coordination point for heme b. T196 serves as a coordination point for Ca(2+). Positions 247, 250, and 255 each coordinate Ca(2+).

The protein belongs to the peroxidase family. Classical plant (class III) peroxidase subfamily. Heme b is required as a cofactor. The cofactor is Ca(2+).

It localises to the secreted. It catalyses the reaction 2 a phenolic donor + H2O2 = 2 a phenolic radical donor + 2 H2O. In terms of biological role, removal of H(2)O(2), oxidation of toxic reductants, biosynthesis and degradation of lignin, suberization, auxin catabolism, response to environmental stresses such as wounding, pathogen attack and oxidative stress. These functions might be dependent on each isozyme/isoform in each plant tissue. The protein is Peroxidase 70 (PER70) of Arabidopsis thaliana (Mouse-ear cress).